Consider the following 80-residue polypeptide: Small ribosomal subunit protein uS17 (80 aa).

This sequence belongs to the universal ribosomal protein uS17 family. In terms of assembly, part of the 30S ribosomal subunit.

Its function is as follows. One of the primary rRNA binding proteins, it binds specifically to the 5'-end of 16S ribosomal RNA. This chain is Small ribosomal subunit protein uS17, found in Brucella suis (strain ATCC 23445 / NCTC 10510).